We begin with the raw amino-acid sequence, 2310 residues long: MSLYKSLDVAIDYAISQLGEFQFQPIRTQSNPSSLLSACLVRAVHVETRRKVIFKFSQQTFKLENEYFLLRQLSSHPNGRNYAIAPAYILLLNETLGALIYDDPGPNILDEWLGNPNPLDLKLFLKFALGVSYVLCFLHEKKIVHGEIRLDTFHYDLNAPIHAKLLTIGSSVSPIRFTLSSLNWKRLYQVQNICHKLQFFSPEQIGNVGRPLDSRSDIYSLGILFYVILTKQYPWGGQSMRIVQSIHMRQFPSVLPRRPDAFPALDQLIQKMTAKSMNSRISSATDLCYTIVELMQEFSTITSSPLLDQKLLSINKPQQEKLKFPKLLLTNSSDYVRIFHELVAFSSKRDLLTSAKRVDKLPKQHLFKYRPVDNEATYCQVVTVTGEKGSGKSNLLNAVADEARKFGYFAMSSFKGHHFSPYSAIFKCVSLIMQQTLREEKQLVTDYFTSLWEFLGFQLIYMGELFEYVPELNSLLSPKYNLHCKRENYFKLKKRDPQQFRSASGRLGFMVCLLEILSFTSRVRPVIIILDELHLADHPSLSLIIGMISHRLPILLILAWDEPVMFKDFSKCLHEAPYAMVTDIRMNLFDRKNITEFLDSTLESPTQALGPLVLLMQKLSKGNPLVLKSLLLIAFANNGFAFHPKSSSWTYDLPVINRSFEALSSYDIPPLLASLLDALLPARCIEFLLWAALLVEPFPFELLRLITTSMHLFIPKEEILDFPLNVLQFDNDNESCQFSETFFREGILSKISLRRAESMHAQIAKELITGTAKEFYDIRTVHHILKGLGVIKKFDNTKPYILALKESADALMQFGSYEYATELLKSCLFLLPRNFWNSKLYTRKDLISIHISLAMCYWWSKDHENAIKVLKNPKLSSSNVYDYLPAFRLLTKIEYYKYQSLRSIDKAQELLSNLGLKLKEPTDDVLREFYDRLSTKFLECDFLVKQSEPLDRKRIDAISVILSECGFVLFNFSQPYYYYFSFLLAEMYLRYGNPSLRYSVMFLASYCFVTRRKPEFLLRISQVDSDLFVIKDRSAVAHAELIYWGLKRELCSTETGSAVTLESILLQCVMFGDKIYGAYCLACLMAQRVFRGDHIHQLLLDQENSETLLLLWDCEPPFTYYLMLIRNSLLALFGLTNNDDPNNILTTKQRTQKDLHDKLTSKKVPCTFCCWYYAGIIFLNTLFHHYEYVMSIAQEVRKLVDGKLYERYYLITRSFIGVAALQLLFYKKNISEFEREKVEDVAHWAQSSLSEMAKCFHAELYKLWVCLLEGLRQRNLGNYMEALRLFEKVTSMGASVFSPIEFPFVLELIGEFYYGRGHKFLAKSYITRALSCLKNIGCYGVENKLRSRYSDLISDVESRGTTVVSIATTTGDYAEKLKLLRNQDINDFSLGLASYSDIFDKPLVTLPVKKSSAVDESENDFYDRNDEESFDIVSLVSVIKCGQLLSSKLRLGPLLTTVIKLVIEYSQAKHAAIILKDASNYTLAAHGNVEKAESFEPPVILSQSDVKIPDSLLSEVFDHCRIVSLYTVSASQDAELLRWLQEEHDMDFFAIIPLQFKESVIGALYLCLSRRAIRTGNVTFLKLLSQQIAISVSNALLFQSLRRTITDNVTLIELQRLSYQRYKAIEEKCITLLDSLPCIVWTLDSDIGEIEYTNASKRNYFGVPEDCHDSLSWKTFIHPDHHHQFQEKLLNLKTLELGDIELLLRMEDGNYHWHLCRGLSFKEDANAKKWIVVCIDINDEKEAREAAMHAVNLKTNFLANMSHELRTPFSSFYGMLSLLSDTKLNEEQYDIVSTAKQSCTSLVQIIDDLLNFSELKSGKMKLEPDKVFDVEENIADCIELVYPSLSSKPVQISYDIYPNVPALLAGDSAKLRQVITNLLGNSVKFTTEGHILLRCMAIDEEINAEENQCKLRFEIEDTGIGLKEEQLKLLFNPFTQVDGSTTRIYGGSGLGLSICLQICKIMDGDIGVQSVYGEGSTFWFHVQLRNVTSKLSQKHFEESHERFANIRQSLKNAKILVVKSFTTSRSIFRSLFSLAVVDTTTIYSDIEQQLIDSLDKRQPYDFLCIEAASGQTEQIITQILSNQKLNKVLLIVLLPSIQRTKVRSDGDPFITSLNKNQSRIFCFREPIRISKLLQNFPALLSKWSTPTKLVEPSQFRASPRKVDQAVVLSSEEKEILQKKYALIAEDNLIARKLLTKQLSNLGFQVHAAVDGVELVKMYEAKQFGFYSVIFADYHMPIRDGAEAVMDIRAYERENNCSTPIPVIALTADIQKSAKQRCLEVGMNFYLTKPFTQKQLVNAVREFVLLEKSAR.

The Protein kinase domain occupies 12-292; sequence DYAISQLGEF…SATDLCYTIV (281 aa). The 143-residue stretch at 1450–1592 folds into the GAF domain; that stretch reads RLGPLLTTVI…LLSQQIAISV (143 aa). Residues 1760–1986 form the Histidine kinase domain; that stretch reads NMSHELRTPF…TFWFHVQLRN (227 aa). Phosphohistidine; by autocatalysis is present on His1763. The region spanning 2180 to 2303 is the Response regulatory domain; that stretch reads YALIAEDNLI…QLVNAVREFV (124 aa). 4-aspartylphosphate is present on Asp2232.

It localises to the cytoplasm. The catalysed reaction is ATP + protein L-histidine = ADP + protein N-phospho-L-histidine.. In terms of biological role, involved in the control of the SAPK-dependent transcriptional response to peroxide stress. Regulates sty1 activity. In Schizosaccharomyces pombe (strain 972 / ATCC 24843) (Fission yeast), this protein is Peroxide stress-activated histidine kinase mak2 (mak2).